The sequence spans 327 residues: RNA ligase 1 (327 aa).

It depends on Mg(2+) as a cofactor. Requires Mn(2+) as cofactor. Post-translationally, AMPylates itself (auto-AMPylation).

It carries out the reaction ATP + (ribonucleotide)n-3'-hydroxyl + 5'-phospho-(ribonucleotide)m = (ribonucleotide)n+m + AMP + diphosphate.. Its function is as follows. Functions as an RNA ligase, in vitro. The ligation reaction entails three nucleotidyl transfer steps. In the first step, the RNA ligase reacts with ATP in the absence of nucleic acid to form a covalent ligase-AMP intermediate and release pyrophosphate. In step 2, the ligase-AMP binds to the nucleic acid and transfers the adenylate to the 5'-PO4 terminus to form an adenylylated intermediate. In step 3, the RNA ligase directs the attack of the 3'-OH on the 5'-phosphoanhydride linkage, resulting in a repaired 3'-5' phosphodiester and release of AMP. Exhibits selectivity for single-stranded RNA substrates and may not have nick-sealing activity on double-stranded DNA-RNA hybrids. May play a role in maintaining RNA integrity under stress conditions, for example in response to reactive oxygen species (ROS). This chain is RNA ligase 1, found in Mus musculus (Mouse).